A 176-amino-acid polypeptide reads, in one-letter code: Ferritin, middle subunit (176 aa).

One can recognise a Ferritin-like diiron domain in the interval 7 to 156 (QNYHSDCEAA…DFITNLKRLG (150 aa)). Positions 24, 59, 62, 104, 138, and 141 each coordinate Fe cation.

Belongs to the ferritin family. Oligomer of 24 subunits. The functional molecule is roughly spherical and contains a central cavity into which the polymeric mineral iron core is deposited.

The enzyme catalyses 4 Fe(2+) + O2 + 4 H(+) = 4 Fe(3+) + 2 H2O. In terms of biological role, stores iron in a soluble, non-toxic, readily available form. Important for iron homeostasis. Has ferroxidase activity. Iron is taken up in the ferrous form and deposited as ferric hydroxides after oxidation. This is Ferritin, middle subunit from Aquarana catesbeiana (American bullfrog).